A 128-amino-acid polypeptide reads, in one-letter code: Small ribosomal subunit protein uS9 (128 aa).

It belongs to the universal ribosomal protein uS9 family. Part of the 30S ribosomal subunit. Contacts proteins S7 and S10.

Part of the top of the head of the 30S subunit. The C-terminal region penetrates the head emerging in the P-site where it contacts tRNA. The protein is Small ribosomal subunit protein uS9 (rpsI) of Thermus thermophilus (strain ATCC BAA-163 / DSM 7039 / HB27).